Here is a 407-residue protein sequence, read N- to C-terminus: Peptidase T (407 aa).

Residue His-81 participates in Zn(2+) binding. The active site involves Asp-83. Zn(2+) is bound at residue Asp-142. Residue Glu-176 is the Proton acceptor of the active site. 3 residues coordinate Zn(2+): Glu-177, Asp-199, and His-381.

The protein belongs to the peptidase M20B family. Zn(2+) is required as a cofactor.

The protein resides in the cytoplasm. It carries out the reaction Release of the N-terminal residue from a tripeptide.. Cleaves the N-terminal amino acid of tripeptides. The polypeptide is Peptidase T (Streptococcus pneumoniae (strain Hungary19A-6)).